A 295-amino-acid polypeptide reads, in one-letter code: Glutamyl-Q tRNA(Asp) synthetase (295 aa).

L-glutamate-binding positions include 5–9 and Glu-41; that span reads RFAPS. The short motif at 8 to 18 is the 'HIGH' region element; sequence PSPTGLLHIGS. Zn(2+) contacts are provided by Cys-97, Cys-99, Tyr-117, and Cys-121. Residues Tyr-178 and Arg-196 each contribute to the L-glutamate site. The 'KMSKS' region signature appears at 234-238; sequence KWSKQ. Residue Lys-237 coordinates ATP.

This sequence belongs to the class-I aminoacyl-tRNA synthetase family. GluQ subfamily. The cofactor is Zn(2+).

Functionally, catalyzes the tRNA-independent activation of glutamate in presence of ATP and the subsequent transfer of glutamate onto a tRNA(Asp). Glutamate is transferred on the 2-amino-5-(4,5-dihydroxy-2-cyclopenten-1-yl) moiety of the queuosine in the wobble position of the QUC anticodon. This Neisseria meningitidis serogroup A / serotype 4A (strain DSM 15465 / Z2491) protein is Glutamyl-Q tRNA(Asp) synthetase.